The sequence spans 430 residues: L-lysine N6-monooxygenase MbtG (430 aa).

A signal peptide spans methionine 1–alanine 21.

This sequence belongs to the lysine N(6)-hydroxylase/L-ornithine N(5)-oxygenase family. It depends on FAD as a cofactor.

The catalysed reaction is L-lysine + NADPH + O2 = N(6)-hydroxy-L-lysine + NADP(+) + H2O. It participates in siderophore biosynthesis; mycobactin biosynthesis. Its function is as follows. Flavoprotein monooxygenase required for N-hydroxylation of the two acylated lysine residues during mycobactin assembly, thus producing the hydroxamate groups necessary for iron sequestration. Is also able, but less efficiently, to hydroxylate L-lysine (non acylated) in vitro. This chain is L-lysine N6-monooxygenase MbtG (mbtG), found in Mycobacterium sp. (strain MCS).